The following is a 196-amino-acid chain: FAD-linked sulfhydryl oxidase ERV2 (196 aa).

Residues 1–12 lie on the Cytoplasmic side of the membrane; it reads MKQIVKRSHAIR. Residues 13–35 traverse the membrane as a helical; Signal-anchor segment; it reads IVAALGIIGLWMFFSSNELSIAT. Over 36 to 196 the chain is Lumenal; sequence PGLIKAKSGI…SLEKEAKQHG (161 aa). Residues 72 to 174 enclose the ERV/ALR sulfhydryl oxidase domain; that stretch reads MGDDKVKKEV…YDCATILEDY (103 aa). FAD-binding residues include K78, R83, and W86. Residues C121 and C124 are joined by a disulfide bond. H127, C150, H153, N157, K162, and Y174 together coordinate FAD. C150 and C167 are joined by a disulfide. C176 and C178 form a disulfide bridge.

In terms of assembly, homodimer. Interacts with the substrate protein PDI1, forming transient intermolecular disulfide bridges. It depends on FAD as a cofactor.

It localises to the endoplasmic reticulum membrane. The enzyme catalyses 2 R'C(R)SH + O2 = R'C(R)S-S(R)CR' + H2O2. In terms of biological role, FAD-dependent sulfhydryl oxidase that catalyzes disulfide bond formation in the endoplasmic reticulum lumen in parallel to ERO1. This chain is FAD-linked sulfhydryl oxidase ERV2 (ERV2), found in Saccharomyces cerevisiae (strain ATCC 204508 / S288c) (Baker's yeast).